The sequence spans 322 residues: Altered inheritance of mitochondria protein 32 (322 aa).

This sequence belongs to the AIM32 family.

In Kluyveromyces lactis (strain ATCC 8585 / CBS 2359 / DSM 70799 / NBRC 1267 / NRRL Y-1140 / WM37) (Yeast), this protein is Altered inheritance of mitochondria protein 32 (AIM32).